We begin with the raw amino-acid sequence, 520 residues long: Glutamate decarboxylase-like protein FG08083 (520 aa).

86-88 (KLV) is a substrate binding site. Lysine 300 carries the N6-(pyridoxal phosphate)lysine modification. Positions 338 to 357 (KNGVSSEQSANTNGSEKESW) are disordered. Positions 340 to 351 (GVSSEQSANTNG) are enriched in polar residues. A substrate-binding site is contributed by arginine 492.

The protein belongs to the group II decarboxylase family. Requires pyridoxal 5'-phosphate as cofactor.

It functions in the pathway mycotoxin biosynthesis. In terms of biological role, glutamate decarboxylase-like protein; part of the gene cluster that mediates the biosynthesis of butenolide, a mycotoxin that shows antibiotic activity but does not seem to play a major role in the spread of head blight in wheat. Butenolide is derived from glutamic acid via a 4-acetamido-2-butenoic acid intermediate. The predicted function of the NADH:flavin oxidoreductase FG08077, the cytochrome P450 monooxygenase FG08079, the decarboxylase FG08083, and the putative acetyltransferase FG08082 are consistent with this pathway, however, the respective activities of the butelonide biosynthesis cluster enzymes have still to be experimentally determined. This chain is Glutamate decarboxylase-like protein FG08083, found in Gibberella zeae (strain ATCC MYA-4620 / CBS 123657 / FGSC 9075 / NRRL 31084 / PH-1) (Wheat head blight fungus).